Here is a 100-residue protein sequence, read N- to C-terminus: Small ribosomal subunit protein uS14c (100 aa).

It belongs to the universal ribosomal protein uS14 family. Part of the 30S ribosomal subunit.

The protein localises to the plastid. Its subcellular location is the chloroplast. Functionally, binds 16S rRNA, required for the assembly of 30S particles. The sequence is that of Small ribosomal subunit protein uS14c from Pyropia yezoensis (Susabi-nori).